We begin with the raw amino-acid sequence, 163 residues long: Putative NOL1/NOP2/Sun domain family member 5B (163 aa).

The active-site Nucleophile is the cysteine 93.

It belongs to the class I-like SAM-binding methyltransferase superfamily. RsmB/NOP family. In terms of tissue distribution, ubiquitous.

The protein is Putative NOL1/NOP2/Sun domain family member 5B (NSUN5P1) of Homo sapiens (Human).